Reading from the N-terminus, the 148-residue chain is Small ribosomal subunit protein bS6 (148 aa).

The tract at residues 96-148 (HEEGQSAMLTRRDDRRERDGDDRPRRREGGFDRGDRGDRSPRRPRDNEAGEGA) is disordered.

It belongs to the bacterial ribosomal protein bS6 family.

In terms of biological role, binds together with bS18 to 16S ribosomal RNA. The sequence is that of Small ribosomal subunit protein bS6 from Brucella suis (strain ATCC 23445 / NCTC 10510).